The chain runs to 569 residues: 2-succinyl-5-enolpyruvyl-6-hydroxy-3-cyclohexene-1-carboxylate synthase (569 aa).

Belongs to the TPP enzyme family. MenD subfamily. As to quaternary structure, homodimer. Mg(2+) is required as a cofactor. The cofactor is Mn(2+). Thiamine diphosphate serves as cofactor.

It carries out the reaction isochorismate + 2-oxoglutarate + H(+) = 5-enolpyruvoyl-6-hydroxy-2-succinyl-cyclohex-3-ene-1-carboxylate + CO2. Its pathway is quinol/quinone metabolism; 1,4-dihydroxy-2-naphthoate biosynthesis; 1,4-dihydroxy-2-naphthoate from chorismate: step 2/7. It functions in the pathway quinol/quinone metabolism; menaquinone biosynthesis. Catalyzes the thiamine diphosphate-dependent decarboxylation of 2-oxoglutarate and the subsequent addition of the resulting succinic semialdehyde-thiamine pyrophosphate anion to isochorismate to yield 2-succinyl-5-enolpyruvyl-6-hydroxy-3-cyclohexene-1-carboxylate (SEPHCHC). The protein is 2-succinyl-5-enolpyruvyl-6-hydroxy-3-cyclohexene-1-carboxylate synthase of Shewanella halifaxensis (strain HAW-EB4).